A 238-amino-acid chain; its full sequence is tRNA (guanine-N(7)-)-methyltransferase (238 aa).

4 residues coordinate S-adenosyl-L-methionine: Glu-68, Glu-93, Asp-120, and Asp-143. The active site involves Asp-143. Substrate-binding positions include Lys-147, Asp-179, and 216–219; that span reads TKFE.

The protein belongs to the class I-like SAM-binding methyltransferase superfamily. TrmB family.

The enzyme catalyses guanosine(46) in tRNA + S-adenosyl-L-methionine = N(7)-methylguanosine(46) in tRNA + S-adenosyl-L-homocysteine. It functions in the pathway tRNA modification; N(7)-methylguanine-tRNA biosynthesis. Its function is as follows. Catalyzes the formation of N(7)-methylguanine at position 46 (m7G46) in tRNA. This is tRNA (guanine-N(7)-)-methyltransferase from Shewanella denitrificans (strain OS217 / ATCC BAA-1090 / DSM 15013).